The primary structure comprises 263 residues: Imidazole glycerol phosphate synthase subunit HisF (263 aa).

Catalysis depends on residues Asp11 and Asp130.

This sequence belongs to the HisA/HisF family. In terms of assembly, heterodimer of HisH and HisF.

It is found in the cytoplasm. The enzyme catalyses 5-[(5-phospho-1-deoxy-D-ribulos-1-ylimino)methylamino]-1-(5-phospho-beta-D-ribosyl)imidazole-4-carboxamide + L-glutamine = D-erythro-1-(imidazol-4-yl)glycerol 3-phosphate + 5-amino-1-(5-phospho-beta-D-ribosyl)imidazole-4-carboxamide + L-glutamate + H(+). It participates in amino-acid biosynthesis; L-histidine biosynthesis; L-histidine from 5-phospho-alpha-D-ribose 1-diphosphate: step 5/9. IGPS catalyzes the conversion of PRFAR and glutamine to IGP, AICAR and glutamate. The HisF subunit catalyzes the cyclization activity that produces IGP and AICAR from PRFAR using the ammonia provided by the HisH subunit. This Herpetosiphon aurantiacus (strain ATCC 23779 / DSM 785 / 114-95) protein is Imidazole glycerol phosphate synthase subunit HisF.